The chain runs to 111 residues: UPF0060 membrane protein HCH_03337 (111 aa).

4 consecutive transmembrane segments (helical) span residues 8-28, 33-53, 65-85, and 88-108; these read LLFA…WLVI, SLWL…LLTL, YGGM…GVGL, and FDFL…LQPI.

Belongs to the UPF0060 family.

The protein localises to the cell inner membrane. This Hahella chejuensis (strain KCTC 2396) protein is UPF0060 membrane protein HCH_03337.